The following is a 117-amino-acid chain: Large ribosomal subunit protein bL20 (117 aa).

Belongs to the bacterial ribosomal protein bL20 family.

Binds directly to 23S ribosomal RNA and is necessary for the in vitro assembly process of the 50S ribosomal subunit. It is not involved in the protein synthesizing functions of that subunit. The chain is Large ribosomal subunit protein bL20 from Leptospira biflexa serovar Patoc (strain Patoc 1 / Ames).